A 392-amino-acid chain; its full sequence is MIIHSLLDTDLYKFTMMQAVLHQHPAAQVDYRFKCRTPGVDLAQFVDEISREIDALCRLRLREDEVDYLRSLRFIKPDFADFLALFHLDRKYLSLTASATHPGEIELTIRGPWLHTILFEVPLLAIINEVWFRNTSEPDFEEGRSRLREKVASLRSMPAGCKIADYGTRRRYSRQWHGELLPLLRDGLGEQFVGTSNVYFAKQYGLTPLGTMAHEYLQAFQALGPRLRDSQVAALESWAREYRGDLGIALSDVVGLDAFLRDFDLYFCKLFDGMRHDSGDPFEWGERVIAHLEAHRVDPRTKVLVFSDGLNIDKVMRLYQHFHTRCRLAFGVGTSLTNDLGPTPLQIVIKMVRCNGQPVAKLSDSPGKSMCEDIGYLRYLRDVFGLPPMAEG.

Histidine 214 is subject to Phosphohistidine; by autocatalysis.

It belongs to the NAPRTase family. In terms of processing, transiently phosphorylated on a His residue during the reaction cycle. Phosphorylation strongly increases the affinity for substrates and increases the rate of nicotinate D-ribonucleotide production. Dephosphorylation regenerates the low-affinity form of the enzyme, leading to product release.

It catalyses the reaction nicotinate + 5-phospho-alpha-D-ribose 1-diphosphate + ATP + H2O = nicotinate beta-D-ribonucleotide + ADP + phosphate + diphosphate. It participates in cofactor biosynthesis; NAD(+) biosynthesis; nicotinate D-ribonucleotide from nicotinate: step 1/1. Catalyzes the synthesis of beta-nicotinate D-ribonucleotide from nicotinate and 5-phospho-D-ribose 1-phosphate at the expense of ATP. This Xanthomonas euvesicatoria pv. vesicatoria (strain 85-10) (Xanthomonas campestris pv. vesicatoria) protein is Nicotinate phosphoribosyltransferase.